A 215-amino-acid chain; its full sequence is Cytochrome b6 (215 aa).

The helical transmembrane segment at 32–52 threads the bilayer; the sequence is IFYCLGGITLTCFLVQVATGF. Residue cysteine 35 coordinates heme c. Histidine 86 and histidine 100 together coordinate heme b. 3 helical membrane-spanning segments follow: residues 90–110, 116–136, and 186–206; these read ASMM…TGGF, LTWV…VTGY, and LHTF…FLMI. Residues histidine 187 and histidine 202 each contribute to the heme b site.

This sequence belongs to the cytochrome b family. PetB subfamily. In terms of assembly, the 4 large subunits of the cytochrome b6-f complex are cytochrome b6, subunit IV (17 kDa polypeptide, PetD), cytochrome f and the Rieske protein, while the 4 small subunits are PetG, PetL, PetM and PetN. The complex functions as a dimer. Heme b serves as cofactor. It depends on heme c as a cofactor.

The protein localises to the plastid. It is found in the chloroplast thylakoid membrane. In terms of biological role, component of the cytochrome b6-f complex, which mediates electron transfer between photosystem II (PSII) and photosystem I (PSI), cyclic electron flow around PSI, and state transitions. In Eucalyptus globulus subsp. globulus (Tasmanian blue gum), this protein is Cytochrome b6.